Here is a 127-residue protein sequence, read N- to C-terminus: Glycine cleavage system H protein (127 aa).

One can recognise a Lipoyl-binding domain in the interval Glu22–Lys104. At Lys63 the chain carries N6-lipoyllysine.

Belongs to the GcvH family. As to quaternary structure, the glycine cleavage system is composed of four proteins: P, T, L and H. (R)-lipoate is required as a cofactor.

The glycine cleavage system catalyzes the degradation of glycine. The H protein shuttles the methylamine group of glycine from the P protein to the T protein. The protein is Glycine cleavage system H protein of Nitratidesulfovibrio vulgaris (strain DP4) (Desulfovibrio vulgaris).